A 118-amino-acid polypeptide reads, in one-letter code: UPF0102 protein RHA1_ro06551 (118 aa).

This sequence belongs to the UPF0102 family.

The polypeptide is UPF0102 protein RHA1_ro06551 (Rhodococcus jostii (strain RHA1)).